Here is a 535-residue protein sequence, read N- to C-terminus: Probable C4-dicarboxylate sensor kinase (535 aa).

Topologically, residues 1–11 (MNKKKLSIRWK) are cytoplasmic. The helical transmembrane segment at 12 to 32 (ITILSYILVIFSFLIGGIVLI) threads the bilayer. Over 33-172 (GNIQHTEERE…IADILLHLKR (140 aa)) the chain is Extracellular. A helical membrane pass occupies residues 173 to 193 (DIAFIVVLTLGFGLAGSFLLA). The Cytoplasmic segment spans residues 194–535 (RHIKKQMFQL…MKGEEAQHGS (342 aa)). A PAS domain is found at 213 to 276 (EERTATFHSM…PEIVERNKAV (64 aa)). One can recognise a Histidine kinase domain in the interval 333–528 (VQNHEHMNKL…SFSIVFPMKG (196 aa)). Position 336 is a phosphohistidine; by autocatalysis (His-336).

Its subcellular location is the cell membrane. The catalysed reaction is ATP + protein L-histidine = ADP + protein N-phospho-L-histidine.. Member of the two-component regulatory system DctS/DctR. Probably activates DctR by phosphorylation. Essential for expression of dctP. This Bacillus subtilis (strain 168) protein is Probable C4-dicarboxylate sensor kinase (dctS).